Here is a 304-residue protein sequence, read N- to C-terminus: Calmodulin-lysine N-methyltransferase (304 aa).

It belongs to the class I-like SAM-binding methyltransferase superfamily. CLNMT methyltransferase family. As to quaternary structure, monomer. In terms of tissue distribution, expressed in discreet spatial and tissue-specific patterns including root tips, leaves-tips, floral buds, stamens, hydathodes, stigma, anther, siliques, apical meristems and germinating seeds. Also observed at high levels in the root stele region.

It localises to the cytoplasm. The protein resides in the nucleus. The catalysed reaction is [calmodulin]-L-lysine + S-adenosyl-L-methionine = [calmodulin]-N(6)-methyl-L-lysine + S-adenosyl-L-homocysteine + H(+). In terms of biological role, catalyzes the trimethylation of calmodulin. Regulates roots development probably by modulating auxin signaling responses. May be involved in gravitropism. Involved in abscisic acid (ABA)-mediated and abiotic stress responses, including salt (NaCl), cold, drought and heat stresses. In Arabidopsis thaliana (Mouse-ear cress), this protein is Calmodulin-lysine N-methyltransferase.